The primary structure comprises 317 residues: Dehydrogenase/reductase SDR family protein 7-like (317 aa).

The Cytoplasmic portion of the chain corresponds to 1–10 (MKNLAERSAG). Residues 11–31 (SLYWWLLATLFLPIAIPGLVL) form a helical; Signal-anchor for type II membrane protein membrane-spanning segment. The Peroxisomal segment spans residues 32-317 (KLLTMMKEQR…KKRAEKLNST (286 aa)). NAD(+) is bound at residue 52 to 76 (LITGASSGLGEALAHSFFLAGCKVV). A substrate-binding site is contributed by Ser189. Tyr202 functions as the Proton acceptor in the catalytic mechanism.

Belongs to the short-chain dehydrogenases/reductases (SDR) family.

It localises to the peroxisome membrane. In terms of biological role, putative oxidoreductase. The polypeptide is Dehydrogenase/reductase SDR family protein 7-like (Anopheles gambiae (African malaria mosquito)).